The chain runs to 416 residues: Phosphatidylinositol 5-phosphate 4-kinase type-2 gamma (416 aa).

Positions 38 to 415 constitute a PIPK domain; the sequence is ASDPMLSVFM…RFREFISNIF (378 aa).

Post-translationally, phosphorylated, phosphorylation is induced by EGF.

Its subcellular location is the endoplasmic reticulum. The protein resides in the cytoplasm. It carries out the reaction a 1,2-diacyl-sn-glycero-3-phospho-(1D-myo-inositol-5-phosphate) + ATP = a 1,2-diacyl-sn-glycero-3-phospho-(1D-myo-inositol-4,5-bisphosphate) + ADP + H(+). The enzyme catalyses 1,2-dihexadecanoyl-sn-glycero-3-phospho-(1D-myo-inositol-5-phosphate) + ATP = 1,2-dihexadecanoyl-sn-glycero-3-phospho-(1D-myo-inositol-4,5-bisphosphate) + ADP + H(+). It catalyses the reaction 1,2-dihexadecanoyl-sn-glycero-3-phospho-(1D-myo-inositol-5-phosphate) + GTP = 1,2-dihexadecanoyl-sn-glycero-3-phospho-(1D-myo-inositol-4,5-bisphosphate) + GDP + H(+). Its function is as follows. Phosphatidylinositol 5-phosphate 4-kinase with low enzymatic activity. May be a GTP sensor, has higher GTP-dependent kinase activity than ATP-dependent kinase activity. This Danio rerio (Zebrafish) protein is Phosphatidylinositol 5-phosphate 4-kinase type-2 gamma (pip4k2c).